The primary structure comprises 135 residues: ATP synthase epsilon chain (135 aa).

The tract at residues 91–122 (EAQKQLSEAEQAWSKFDGQPNSPDKIKAQQAF) is disordered.

The protein belongs to the ATPase epsilon chain family. F-type ATPases have 2 components, CF(1) - the catalytic core - and CF(0) - the membrane proton channel. CF(1) has five subunits: alpha(3), beta(3), gamma(1), delta(1), epsilon(1). CF(0) has three main subunits: a, b and c.

It localises to the cellular thylakoid membrane. Functionally, produces ATP from ADP in the presence of a proton gradient across the membrane. This is ATP synthase epsilon chain from Synechococcus sp. (strain RCC307).